Consider the following 350-residue polypeptide: Renin receptor (350 aa).

Positions 1–17 are cleaved as a signal peptide; sequence MAVLVVLLSSLVSSALA. The Extracellular portion of the chain corresponds to 18 to 302; that stretch reads NEFSILRSPG…YNLAYKYNLE (285 aa). The chain crosses the membrane as a helical span at residues 303–323; it reads YSVVFNLVLWIMTGLALAVII. Topologically, residues 324–350 are cytoplasmic; the sequence is TSYNIWNMDPGYDSIIYRMTNQKIRMD. The Mediates retrograde transport to the ER motif lies at 346-350; the sequence is KIRMD.

As to quaternary structure, interacts with renin. Accessory component of the multisubunit proton-transporting vacuolar (V)-ATPase protein pump. Interacts (via N-terminus) with ATP6AP1 (via N-terminus). Interacts with ATP6V0D1; ATP6V0D1 is a V-ATPase complex subunit and the interaction promotes V-ATPase complex assembly. Interacts with TMEM9; TMEM9 is a V-ATPase assembly regulator and the interaction induces the interaction with ATP6V0D1. Interacts with VMA21 (via N-terminus); VMA21 is a V-ATPase accessory component. Phosphorylated. In terms of processing, proteolytically cleaved by a furin-like convertase in the trans-Golgi network to generate N- and C-terminal fragments. In terms of tissue distribution, expressed in the brain.

It localises to the endoplasmic reticulum membrane. Its subcellular location is the lysosome membrane. The protein resides in the cytoplasmic vesicle. The protein localises to the autophagosome membrane. It is found in the cell projection. It localises to the dendritic spine membrane. Its subcellular location is the axon. The protein resides in the endosome membrane. The protein localises to the clathrin-coated vesicle membrane. It is found in the secretory vesicle. It localises to the synaptic vesicle membrane. Its function is as follows. Multifunctional protein which functions as a renin, prorenin cellular receptor and is involved in the assembly of the lysosomal proton-transporting V-type ATPase (V-ATPase) and the acidification of the endo-lysosomal system. May mediate renin-dependent cellular responses by activating ERK1 and ERK2. By increasing the catalytic efficiency of renin in AGT/angiotensinogen conversion to angiotensin I, may also play a role in the renin-angiotensin system (RAS). Through its function in V-type ATPase (v-ATPase) assembly and acidification of the lysosome it regulates protein degradation and may control different signaling pathways important for proper brain development, synapse morphology and synaptic transmission. The sequence is that of Renin receptor (Atp6ap2) from Rattus norvegicus (Rat).